Consider the following 562-residue polypeptide: Phosphopantothenoylcysteine decarboxylase subunit SIS2 (562 aa).

Positions Met-1 to Lys-10 are enriched in polar residues. Disordered regions lie at residues Met-1–Thr-63, Phe-97–Asp-165, and Gly-490–Gln-562. The segment covering Gly-27 to Asp-42 has biased composition (basic and acidic residues). Polar residues-rich tracts occupy residues Ile-44–Thr-63 and Asp-99–Lys-113. A phosphoserine mark is found at Ser-47, Ser-50, Ser-54, and Ser-56. Over residues Ser-121–Pro-134 the composition is skewed to low complexity. Residues Asn-142–Pro-156 show a composition bias toward polar residues. The residue at position 155 (Ser-155) is a Phosphoserine. Acidic residues predominate over residues Glu-496–Glu-553.

This sequence belongs to the HFCD (homooligomeric flavin containing Cys decarboxylase) superfamily. As to quaternary structure, interacts with the C-terminal domain of PPZ1. Component of the phosphopantothenoylcysteine decarboxylase (PPCDC) complex, a heterotrimer composed of CAB3, SIS2 and VHS3.

The protein resides in the nucleus. It localises to the cytoplasm. In terms of biological role, component of the phosphopantothenoylcysteine decarboxylase (PPCDC) involved in the coenzyme A synthesis. Acts as an inhibitory subunit of protein phosphatase PPZ1, which is involved in many cellular processes such as G1-S transition or salt tolerance. Also modulates the expression of the ENA1 ATPase. The sequence is that of Phosphopantothenoylcysteine decarboxylase subunit SIS2 (SIS2) from Saccharomyces cerevisiae (strain ATCC 204508 / S288c) (Baker's yeast).